The sequence spans 287 residues: D-alanine--D-alanine ligase (287 aa).

One can recognise an ATP-grasp domain in the interval 98–283 (KTKQIAQSVG…FDDVVRITVE (186 aa)). 124–169 (PVIIKPVDEGSSKGLFLCNNKEEAEEAVKKLAKPIIEDYIIGEELT) contributes to the ATP binding site. Mg(2+) is bound by residues aspartate 238, glutamate 250, and asparagine 252.

The protein belongs to the D-alanine--D-alanine ligase family. It depends on Mg(2+) as a cofactor. Mn(2+) is required as a cofactor.

The protein resides in the cytoplasm. The enzyme catalyses 2 D-alanine + ATP = D-alanyl-D-alanine + ADP + phosphate + H(+). Its pathway is cell wall biogenesis; peptidoglycan biosynthesis. Cell wall formation. The chain is D-alanine--D-alanine ligase from Fusobacterium nucleatum subsp. nucleatum (strain ATCC 25586 / DSM 15643 / BCRC 10681 / CIP 101130 / JCM 8532 / KCTC 2640 / LMG 13131 / VPI 4355).